Consider the following 258-residue polypeptide: Aquaglyceroporin (258 aa).

Topologically, residues 1–11 (MHMLFYKSYVR) are cytoplasmic. Residues 12-32 (EFIGEFLGTFVLMFLGEGATA) traverse the membrane as a helical segment. At 33 to 45 (NFHTTGLSGDWYK) the chain is on the extracellular side. Residues 46–66 (LCLGWGLAVFFGILVSAKLSG) form a helical membrane-spanning segment. Glycerol-binding residues include Gly-66, Ala-67, and Asn-70. At 67 to 87 (AHLNLAVSIGLSSINKFDLKK) the chain is on the cytoplasmic side. A helical membrane pass occupies residues 88 to 108 (IPVYFFAQLLGAFVGTSTVYG). Topologically, residues 109-135 (LYHGFISNSKIPQFAWETSRNPSISLT) are extracellular. Ser-127 contributes to the glycerol binding site. A helical membrane pass occupies residues 136–156 (GAFFNELILTGILLLVILVVV). The Cytoplasmic segment spans residues 157–171 (DENICGKFHILKLSS). The chain crosses the membrane as a helical span at residues 172 to 192 (VVGLIILCIGITFGGNTGFAL). Residues Gly-189, Phe-190, Asn-193, and Arg-196 each contribute to the glycerol site. The Extracellular segment spans residues 193–217 (NPSRDLGSRFLSLIAYGKDTFTKDN). The helical transmembrane segment at 218-238 (FYFWVPLVAPCVGSVVFCQFY) threads the bilayer. The Cytoplasmic portion of the chain corresponds to 239–258 (DKVICPLVDLANNEKDGVDL).

The protein belongs to the MIP/aquaporin (TC 1.A.8) family. As to quaternary structure, homotetramer.

The protein resides in the cell membrane. The enzyme catalyses H2O(in) = H2O(out). It carries out the reaction glycerol(in) = glycerol(out). The catalysed reaction is urea(in) = urea(out). It catalyses the reaction NH4(+)(in) = NH4(+)(out). The enzyme catalyses methylamine(out) = methylamine(in). It carries out the reaction formamide(out) = formamide(in). Functionally, mediates water and glycerol transport across the cell membrane. Permeable to sugar alcohols of up to five carbons and urea. Permeable to ammonia, methylamine and formamide. The chain is Aquaglyceroporin from Plasmodium falciparum (isolate 3D7).